Reading from the N-terminus, the 130-residue chain is Small ribosomal subunit protein uS9 (130 aa).

It belongs to the universal ribosomal protein uS9 family.

The protein is Small ribosomal subunit protein uS9 of Pseudomonas aeruginosa (strain LESB58).